Reading from the N-terminus, the 491-residue chain is NADH-quinone oxidoreductase subunit N (491 aa).

14 helical membrane passes run 11–31 (ATAEIFVAVMALVIMLATTFA), 38–58 (LAYGLTLVTLIGAAIITYNTA), 74–94 (LLGDVLKLLIYFSMAVALLYG), 106–126 (PEYYVLALLMTLGMMVMVTSN), 128–148 (LLSMYIGLELMSLSLYALVAF), 163–183 (FVLGALASGLLLYGMSMLYGA), 206–226 (LLFGLVFLMAGICFKLGVVPF), 243–263 (LIIATAPKLAAFAMAVRLLVW), 272–292 (WQTMLMFVAVLSIVLGNLAAI), 301–321 (LAYSGISHMGFMLLGLLSGVV), 336–356 (MFYAISYVIMSLASFGMIILL), 379–399 (FAAMMMFVMFSMAGIPFFIGF), 410–430 (VAAGYIWVAVVAVLMSVIGAF), and 465–485 (LAIAAIGLAPQGVMTLCTFVL).

The protein belongs to the complex I subunit 2 family. NDH-1 is composed of 14 different subunits. Subunits NuoA, H, J, K, L, M, N constitute the membrane sector of the complex.

The protein localises to the cell inner membrane. It catalyses the reaction a quinone + NADH + 5 H(+)(in) = a quinol + NAD(+) + 4 H(+)(out). In terms of biological role, NDH-1 shuttles electrons from NADH, via FMN and iron-sulfur (Fe-S) centers, to quinones in the respiratory chain. The immediate electron acceptor for the enzyme in this species is believed to be ubiquinone. Couples the redox reaction to proton translocation (for every two electrons transferred, four hydrogen ions are translocated across the cytoplasmic membrane), and thus conserves the redox energy in a proton gradient. This Azoarcus sp. (strain BH72) protein is NADH-quinone oxidoreductase subunit N.